The sequence spans 178 residues: 6,7-dimethyl-8-ribityllumazine synthase (178 aa).

5-amino-6-(D-ribitylamino)uracil-binding positions include Phe-23, Ser-61–Glu-63, and Ala-85–Ile-87. Gln-90–Thr-91 serves as a coordination point for (2S)-2-hydroxy-3-oxobutyl phosphate. The active-site Proton donor is the His-93. Position 118 (Tyr-118) interacts with 5-amino-6-(D-ribitylamino)uracil. Arg-132 is a binding site for (2S)-2-hydroxy-3-oxobutyl phosphate.

It belongs to the DMRL synthase family.

It catalyses the reaction (2S)-2-hydroxy-3-oxobutyl phosphate + 5-amino-6-(D-ribitylamino)uracil = 6,7-dimethyl-8-(1-D-ribityl)lumazine + phosphate + 2 H2O + H(+). It participates in cofactor biosynthesis; riboflavin biosynthesis; riboflavin from 2-hydroxy-3-oxobutyl phosphate and 5-amino-6-(D-ribitylamino)uracil: step 1/2. Catalyzes the formation of 6,7-dimethyl-8-ribityllumazine by condensation of 5-amino-6-(D-ribitylamino)uracil with 3,4-dihydroxy-2-butanone 4-phosphate. This is the penultimate step in the biosynthesis of riboflavin. The polypeptide is 6,7-dimethyl-8-ribityllumazine synthase (Thermosynechococcus vestitus (strain NIES-2133 / IAM M-273 / BP-1)).